A 288-amino-acid polypeptide reads, in one-letter code: ATP synthase gamma chain (288 aa).

This sequence belongs to the ATPase gamma chain family. F-type ATPases have 2 components, CF(1) - the catalytic core - and CF(0) - the membrane proton channel. CF(1) has five subunits: alpha(3), beta(3), gamma(1), delta(1), epsilon(1). CF(0) has three main subunits: a, b and c.

It localises to the cell inner membrane. In terms of biological role, produces ATP from ADP in the presence of a proton gradient across the membrane. The gamma chain is believed to be important in regulating ATPase activity and the flow of protons through the CF(0) complex. The chain is ATP synthase gamma chain from Rickettsia bellii (strain RML369-C).